The sequence spans 847 residues: MNSPALLRCLLGSKKRAAVVVAFWVLIAGLLAGVAPALESVEDNASANLPPAASDSMKARDLVRAQLPGQDATPAIIVVRGKGTDAAKSATQSVAAITSALSGTSRPDHVVSVVSTVTAPDAAAELVSQDRGAQLVIVPMEGSPSDESFQNAVDEVRALASDRAGPADVAVTGPAGIATDTVKVFSGGDKVLLLATVVLVLIILLAIYRSPLMALVPLLAVGVAMRVAETLGAILADAGVITVSSQTASIMTVLLFGVGTDYALIITARYRETLLDEPDRARAMQAAVRRTAESVLASASTIVLAMFALLVAVSPALHGFGPYLALGVAVMALVAFTFIPALVLLLGRSVFWPGGVDKAAERSRGAGIWHRIAALVARAPVKVASAVIALLVVLSAGLLGYQESFNTLSGFRAATESEHGQHLIREEFGPGEIAPSTVVVHSQDNLRSSPAPADIATALTDADHVSRVADPRMGKDGKTVFYDVILDLDPYSSKALDAIGPLKQATQSAAQAAGVQDATVLIGGETAQNADIRSALDRDTTLIVLLVLAIVTVVLVLLLRSLLAPLYLVATLLLSFLATLGATTFFTVTVLGDDGIGNRVTAYIFVFLVALGVDYNIFIMSRFKQELRTQPPAKAITAALTRTGGVISSAGLILAATFAVLMTQPIRELFQFGFAMACGILLDTFLIRPLLVPAIVRLLGNRALWPARPGTPQTPSTPTSEPPSADAPAARAAETGTSRLLRAFTWIAIIEACTWAGLLAGMYLKYIPETTELGVRIFGTLHGAAFIVYVSLTVLVAIRLKWRLGRTTIFALLAAVPPFMTIAFEIWARRTGRLPQPTADPSPTPAL.

A run of 12 helical transmembrane segments spans residues 18–38, 187–207, 215–235, 248–268, 302–322, 326–346, 381–401, 539–559, 562–582, 600–620, 643–663, and 672–692; these read AVVV…APAL, GGDK…LLAI, LVPL…GAIL, ASIM…IITA, IVLA…GFGP, LGVA…VLLL, VKVA…LLGY, DTTL…VLLL, LLAP…TLGA, VTAY…IFIM, TGGV…VLMT, and FGFA…PLLV. The tract at residues 708–729 is disordered; that stretch reads RPGTPQTPSTPTSEPPSADAPA. A run of 3 helical transmembrane segments spans residues 744 to 764, 778 to 798, and 808 to 828; these read FTWI…GMYL, FGTL…LVAI, and TIFA…EIWA.

It belongs to the resistance-nodulation-cell division (RND) (TC 2.A.6) family. MmpL subfamily.

Its subcellular location is the cell membrane. The sequence is that of Putative membrane protein SCO5905 from Streptomyces coelicolor (strain ATCC BAA-471 / A3(2) / M145).